Consider the following 454-residue polypeptide: Bifunctional protein GlmU (454 aa).

The segment at 1–225 is pyrophosphorylase; that stretch reads MNIVILAAGM…LWETLGVNSK (225 aa). UDP-N-acetyl-alpha-D-glucosamine is bound by residues 6 to 9, K20, Q71, 76 to 77, 98 to 100, G135, E150, N165, and N223; these read LAAG, GT, and YGD. D100 contacts Mg(2+). N223 lines the Mg(2+) pocket. The tract at residues 226–246 is linker; that stretch reads VQLAEIERIHQRNIAQRLLEA. The interval 247-454 is N-acetyltransferase; the sequence is GVTLLDPARI…WQRPVKQPKK (208 aa). UDP-N-acetyl-alpha-D-glucosamine is bound by residues R329 and K347. Catalysis depends on H359, which acts as the Proton acceptor. Residues Y362 and N373 each coordinate UDP-N-acetyl-alpha-D-glucosamine. Residues A376, 382-383, S401, A419, and R436 contribute to the acetyl-CoA site; that span reads NY.

This sequence in the N-terminal section; belongs to the N-acetylglucosamine-1-phosphate uridyltransferase family. It in the C-terminal section; belongs to the transferase hexapeptide repeat family. In terms of assembly, homotrimer. It depends on Mg(2+) as a cofactor.

The protein localises to the cytoplasm. The enzyme catalyses alpha-D-glucosamine 1-phosphate + acetyl-CoA = N-acetyl-alpha-D-glucosamine 1-phosphate + CoA + H(+). It catalyses the reaction N-acetyl-alpha-D-glucosamine 1-phosphate + UTP + H(+) = UDP-N-acetyl-alpha-D-glucosamine + diphosphate. It functions in the pathway nucleotide-sugar biosynthesis; UDP-N-acetyl-alpha-D-glucosamine biosynthesis; N-acetyl-alpha-D-glucosamine 1-phosphate from alpha-D-glucosamine 6-phosphate (route II): step 2/2. The protein operates within nucleotide-sugar biosynthesis; UDP-N-acetyl-alpha-D-glucosamine biosynthesis; UDP-N-acetyl-alpha-D-glucosamine from N-acetyl-alpha-D-glucosamine 1-phosphate: step 1/1. It participates in bacterial outer membrane biogenesis; LPS lipid A biosynthesis. Its function is as follows. Catalyzes the last two sequential reactions in the de novo biosynthetic pathway for UDP-N-acetylglucosamine (UDP-GlcNAc). The C-terminal domain catalyzes the transfer of acetyl group from acetyl coenzyme A to glucosamine-1-phosphate (GlcN-1-P) to produce N-acetylglucosamine-1-phosphate (GlcNAc-1-P), which is converted into UDP-GlcNAc by the transfer of uridine 5-monophosphate (from uridine 5-triphosphate), a reaction catalyzed by the N-terminal domain. The sequence is that of Bifunctional protein GlmU from Cupriavidus metallidurans (strain ATCC 43123 / DSM 2839 / NBRC 102507 / CH34) (Ralstonia metallidurans).